The following is a 343-amino-acid chain: RNA-binding protein 43 (343 aa).

The RRM domain occupies 15–90 (RTVVVSGLPV…PLLTVSHFSE (76 aa)). A disordered region spans residues 170-200 (RRNWTGQNPRRVLQKNENSAPTLGTSVPEPA). Residues 184 to 194 (KNENSAPTLGT) are compositionally biased toward polar residues.

In Rattus norvegicus (Rat), this protein is RNA-binding protein 43 (Rbm43).